Reading from the N-terminus, the 591-residue chain is Aspartate--tRNA ligase (591 aa).

Glu176 is an L-aspartate binding site. Positions 200-203 (QILK) are aspartate. Arg222 is a binding site for L-aspartate. ATP contacts are provided by residues 222–224 (RDE) and Gln231. His450 is an L-aspartate binding site. ATP is bound at residue Glu484. L-aspartate is bound at residue Arg491. ATP is bound at residue 536-539 (GLDR).

It belongs to the class-II aminoacyl-tRNA synthetase family. Type 1 subfamily. In terms of assembly, homodimer.

The protein resides in the cytoplasm. The enzyme catalyses tRNA(Asp) + L-aspartate + ATP = L-aspartyl-tRNA(Asp) + AMP + diphosphate. Its function is as follows. Catalyzes the attachment of L-aspartate to tRNA(Asp) in a two-step reaction: L-aspartate is first activated by ATP to form Asp-AMP and then transferred to the acceptor end of tRNA(Asp). The protein is Aspartate--tRNA ligase of Listeria monocytogenes serotype 4b (strain F2365).